The primary structure comprises 500 residues: Cholesterol 24-hydroxylase (500 aa).

Residues Pro-3–Val-23 form a helical membrane-spanning segment. Cys-437 provides a ligand contact to heme.

This sequence belongs to the cytochrome P450 family. Heme is required as a cofactor. Expressed in high level in the pyramidal cells of the hippocampus, Purkinje cells of the cerebellum, and neuronal cell bodies in layers II/III, V, and VI of the cortex. Expressed in hippocampal and cerebellar interneurons, in retinal ganglion cells, and in a subset of retinal cells localized to the inner nuclear layer (at protein level).

The protein resides in the endoplasmic reticulum membrane. Its subcellular location is the microsome membrane. It localises to the postsynapse. It is found in the presynapse. The protein localises to the cell projection. The protein resides in the dendrite. The enzyme catalyses cholesterol + reduced [NADPH--hemoprotein reductase] + O2 = (24S)-hydroxycholesterol + oxidized [NADPH--hemoprotein reductase] + H2O + H(+). It catalyses the reaction cholestanol + reduced [NADPH--hemoprotein reductase] + O2 = (24S)-hydroxycholestanol + oxidized [NADPH--hemoprotein reductase] + H2O + H(+). The catalysed reaction is 7-dehydrocholesterol + reduced [NADPH--hemoprotein reductase] + O2 = cholesta-5,7-dien-3beta,24S-diol + oxidized [NADPH--hemoprotein reductase] + H2O + H(+). It carries out the reaction 7-dehydrocholesterol + reduced [NADPH--hemoprotein reductase] + O2 = cholesta-5,7-dien-3beta,25-diol + oxidized [NADPH--hemoprotein reductase] + H2O + H(+). The enzyme catalyses desmosterol + reduced [NADPH--hemoprotein reductase] + O2 = (24Z),26-hydroxydesmosterol + oxidized [NADPH--hemoprotein reductase] + H2O + H(+). It catalyses the reaction desmosterol + reduced [NADPH--hemoprotein reductase] + O2 = (24S)-25-epoxycholesterol + oxidized [NADPH--hemoprotein reductase] + H2O + H(+). The catalysed reaction is 4beta-hydroxycholesterol + reduced [NADPH--hemoprotein reductase] + O2 = 4beta,24S-dihydroxycholesterol + oxidized [NADPH--hemoprotein reductase] + H2O + H(+). It carries out the reaction (24S)-hydroxycholesterol + reduced [NADPH--hemoprotein reductase] + O2 = (24S,25R)-24,26-dihydroxycholesterol + oxidized [NADPH--hemoprotein reductase] + H2O + H(+). The enzyme catalyses (24S)-hydroxycholesterol + reduced [NADPH--hemoprotein reductase] + O2 = 24S,25-dihydroxycholesterol + oxidized [NADPH--hemoprotein reductase] + H2O + H(+). It catalyses the reaction 7alpha-hydroxycholesterol + reduced [NADPH--hemoprotein reductase] + O2 = (24S)-7alpha-dihydroxycholesterol + oxidized [NADPH--hemoprotein reductase] + H2O + H(+). The catalysed reaction is progesterone + reduced [NADPH--hemoprotein reductase] + O2 = 17alpha-hydroxyprogesterone + oxidized [NADPH--hemoprotein reductase] + H2O + H(+). It carries out the reaction testosterone + reduced [NADPH--hemoprotein reductase] + O2 = 16beta,17beta-dihydroxyandrost-4-en-3-one + oxidized [NADPH--hemoprotein reductase] + H2O + H(+). The enzyme catalyses testosterone + reduced [NADPH--hemoprotein reductase] + O2 = 2-hydroxytestosterone + oxidized [NADPH--hemoprotein reductase] + H2O + H(+). It catalyses the reaction testosterone + reduced [NADPH--hemoprotein reductase] + O2 = 6beta,17beta-dihydroxyandrost-4-en-3-one + oxidized [NADPH--hemoprotein reductase] + H2O + H(+). It participates in steroid metabolism; cholesterol degradation. The protein operates within lipid metabolism; C21-steroid hormone metabolism. In terms of biological role, P450 monooxygenase that plays a major role in cholesterol homeostasis in the brain. Primarily catalyzes the hydroxylation (with S stereochemistry) at C-24 of cholesterol side chain, triggering cholesterol diffusion out of neurons and its further degradation. By promoting constant cholesterol elimination in neurons, may activate the mevalonate pathway and coordinate the synthesis of new cholesterol and nonsterol isoprenoids involved in synaptic activity and learning. Further hydroxylates cholesterol derivatives and hormone steroids on both the ring and side chain of these molecules, converting them into active oxysterols involved in lipid signaling and biosynthesis. Acts as an epoxidase converting cholesta-5,24-dien-3beta-ol/desmosterol into (24S),25-epoxycholesterol, an abundant lipid ligand of nuclear NR1H2 and NR1H3 receptors shown to promote neurogenesis in developing brain. May also catalyze the oxidative metabolism of xenobiotics, such as clotrimazole. This chain is Cholesterol 24-hydroxylase, found in Mus musculus (Mouse).